The following is a 198-amino-acid chain: Protein GrpE (198 aa).

It belongs to the GrpE family. Homodimer.

Its subcellular location is the cytoplasm. In terms of biological role, participates actively in the response to hyperosmotic and heat shock by preventing the aggregation of stress-denatured proteins, in association with DnaK and GrpE. It is the nucleotide exchange factor for DnaK and may function as a thermosensor. Unfolded proteins bind initially to DnaJ; upon interaction with the DnaJ-bound protein, DnaK hydrolyzes its bound ATP, resulting in the formation of a stable complex. GrpE releases ADP from DnaK; ATP binding to DnaK triggers the release of the substrate protein, thus completing the reaction cycle. Several rounds of ATP-dependent interactions between DnaJ, DnaK and GrpE are required for fully efficient folding. In Actinobacillus pleuropneumoniae serotype 7 (strain AP76), this protein is Protein GrpE.